The sequence spans 660 residues: Pseudouridylate synthase 7 homolog (660 aa).

The disordered stretch occupies residues 1-99 (MEMTSTSLKR…EAGEEEEAES (99 aa)). Serine 7 is subject to Phosphoserine. A compositionally biased stretch (basic and acidic residues) spans 22-32 (TPHDETKKQKV). A compositionally biased stretch (acidic residues) spans 76-99 (QEEEEEEEEEDGLSEAGEEEEAES). Serine 126 is modified (phosphoserine). The Nucleophile role is filled by aspartate 293. In terms of domain architecture, TRUD spans 369–579 (GFINYYGMQR…SGAYRRIIIR (211 aa)).

Belongs to the pseudouridine synthase TruD family. Interacts with SIRT1.

The protein resides in the nucleus. It catalyses the reaction a uridine in tRNA = a pseudouridine in tRNA. The enzyme catalyses uridine(13) in tRNA = pseudouridine(13) in tRNA. It carries out the reaction a uridine in mRNA = a pseudouridine in mRNA. Functionally, pseudouridylate synthase that catalyzes pseudouridylation of RNAs. Acts as a regulator of protein synthesis in embryonic stem cells by mediating pseudouridylation of RNA fragments derived from tRNAs (tRFs): pseudouridylated tRFs inhibit translation by targeting the translation initiation complex. Also catalyzes pseudouridylation of mRNAs: mediates pseudouridylation of mRNAs with the consensus sequence 5'-UGUAG-3'. Acts as a regulator of pre-mRNA splicing by mediating pseudouridylation of pre-mRNAs at locations associated with alternatively spliced regions. Pseudouridylation of pre-mRNAs near splice sites directly regulates mRNA splicing and mRNA 3'-end processing. In addition to mRNAs and tRNAs, binds other types of RNAs, such as snRNAs, Y RNAs and vault RNAs, suggesting that it can catalyze pseudouridylation of many RNA types. The polypeptide is Pseudouridylate synthase 7 homolog (Mus musculus (Mouse)).